The sequence spans 95 residues: Aspartyl/glutamyl-tRNA(Asn/Gln) amidotransferase subunit C (95 aa).

It belongs to the GatC family. As to quaternary structure, heterotrimer of A, B and C subunits.

It catalyses the reaction L-glutamyl-tRNA(Gln) + L-glutamine + ATP + H2O = L-glutaminyl-tRNA(Gln) + L-glutamate + ADP + phosphate + H(+). It carries out the reaction L-aspartyl-tRNA(Asn) + L-glutamine + ATP + H2O = L-asparaginyl-tRNA(Asn) + L-glutamate + ADP + phosphate + 2 H(+). Its function is as follows. Allows the formation of correctly charged Asn-tRNA(Asn) or Gln-tRNA(Gln) through the transamidation of misacylated Asp-tRNA(Asn) or Glu-tRNA(Gln) in organisms which lack either or both of asparaginyl-tRNA or glutaminyl-tRNA synthetases. The reaction takes place in the presence of glutamine and ATP through an activated phospho-Asp-tRNA(Asn) or phospho-Glu-tRNA(Gln). The sequence is that of Aspartyl/glutamyl-tRNA(Asn/Gln) amidotransferase subunit C from Rhodopseudomonas palustris (strain TIE-1).